Here is a 2273-residue protein sequence, read N- to C-terminus: Acetyl-CoA carboxylase, mitochondrial (2273 aa).

A mitochondrion-targeting transit peptide spans 1–104 (KGKTITHGQS…RGNIHKHTRL (104 aa)). The region spanning 134-635 (VISKILIANN…STGWLDDLIL (502 aa)) is the Biotin carboxylation domain. An ATP-grasp domain is found at 292–484 (KTNFVSVPDD…LPATQLQIAM (193 aa)). Residue 332-337 (GGGGKG) coordinates ATP. The active site involves Arg-459. The Biotinyl-binding domain maps to 763–837 (LEAELNPTQV…EAGDVIAKLT (75 aa)). Lys-804 carries the N6-biotinyllysine modification. Residues 1532-1867 (PYSVKDWLQP…KRDMSPPLLE (336 aa)) enclose the CoA carboxyltransferase N-terminal domain. A carboxyltransferase region spans residues 1532–2187 (PYSVKDWLQP…EGQVIKRLQK (656 aa)). Residues Arg-1776, Lys-2080, and Arg-2082 each contribute to the CoA site. Positions 1871–2187 (RWDRDVDFKP…EGQVIKRLQK (317 aa)) constitute a CoA carboxyltransferase C-terminal domain.

It depends on biotin as a cofactor.

The protein resides in the mitochondrion. It carries out the reaction hydrogencarbonate + acetyl-CoA + ATP = malonyl-CoA + ADP + phosphate + H(+). The catalysed reaction is N(6)-biotinyl-L-lysyl-[protein] + hydrogencarbonate + ATP = N(6)-carboxybiotinyl-L-lysyl-[protein] + ADP + phosphate + H(+). The protein operates within lipid metabolism; malonyl-CoA biosynthesis; malonyl-CoA from acetyl-CoA: step 1/1. In terms of biological role, catalyzes the rate-limiting reaction in the mitochondrial fatty acid synthesis (FAS) type II pathway. Responsible for the production of the mitochondrial malonyl-CoA, used for the biosynthesis of the cofactor lipoic acid. This protein carries three functions: biotin carboxyl carrier protein, biotin carboxylase, and carboxyltransferase. This chain is Acetyl-CoA carboxylase, mitochondrial (HFA1), found in Saccharomyces cerevisiae (strain Lalvin EC1118 / Prise de mousse) (Baker's yeast).